The chain runs to 201 residues: Peptidyl-tRNA hydrolase (201 aa).

Tyrosine 17 is a tRNA binding site. The active-site Proton acceptor is histidine 22. TRNA is bound by residues phenylalanine 76, asparagine 78, and asparagine 124.

It belongs to the PTH family. In terms of assembly, monomer.

It localises to the cytoplasm. It catalyses the reaction an N-acyl-L-alpha-aminoacyl-tRNA + H2O = an N-acyl-L-amino acid + a tRNA + H(+). Hydrolyzes ribosome-free peptidyl-tRNAs (with 1 or more amino acids incorporated), which drop off the ribosome during protein synthesis, or as a result of ribosome stalling. In terms of biological role, catalyzes the release of premature peptidyl moieties from peptidyl-tRNA molecules trapped in stalled 50S ribosomal subunits, and thus maintains levels of free tRNAs and 50S ribosomes. This Nitratidesulfovibrio vulgaris (strain ATCC 29579 / DSM 644 / CCUG 34227 / NCIMB 8303 / VKM B-1760 / Hildenborough) (Desulfovibrio vulgaris) protein is Peptidyl-tRNA hydrolase.